Here is a 964-residue protein sequence, read N- to C-terminus: DNA polymerase (964 aa).

It belongs to the DNA polymerase type-B family.

The enzyme catalyses DNA(n) + a 2'-deoxyribonucleoside 5'-triphosphate = DNA(n+1) + diphosphate. Catalyzes DNA synthesis. This Choristoneura biennis entomopoxvirus (CbEPV) protein is DNA polymerase (POL).